The following is a 254-amino-acid chain: Major prion protein (254 aa).

The signal sequence occupies residues 1–22 (MANLSYWLLALFVATWTDVGLC). The segment at 23–231 (KKRPKPGGWN…SQAYYDGRRS (209 aa)) is interaction with GRB2, ERI3 and SYN1. A disordered region spans residues 25–108 (RPKPGGWNTG…WNKPNKPKTS (84 aa)). A run of 5 repeats spans residues 51–59 (PQGGGTWGQ), 60–67 (PHGGGWGQ), 68–75 (PHGGGWGQ), 76–83 (PHGGGWGQ), and 84–91 (PHGGGWGQ). The segment at 51–91 (PQGGGTWGQPHGGGWGQPHGGGWGQPHGGGWGQPHGGGWGQ) is 5 X 8 AA tandem repeats of P-H-G-G-G-W-G-Q. Residues 52 to 95 (QGGGTWGQPHGGGWGQPHGGGWGQPHGGGWGQPHGGGWGQGGGT) show a composition bias toward gly residues. The Cu(2+) site is built by His61, Gly62, Gly63, His69, Gly70, Gly71, His77, Gly78, Gly79, His85, Gly86, and Gly87. The tract at residues 90–231 (GQGGGTHNQW…SQAYYDGRRS (142 aa)) is prP27-30 (protease resistant core). Cys179 and Cys214 form a disulfide bridge. Residues Asn181 and Asn197 are each glycosylated (N-linked (GlcNAc...) asparagine). Ser231 carries the GPI-anchor amidated serine lipid modification. The propeptide at 232–254 (SAVLFSSPPVILLISFLIFLIVG) is removed in mature form.

This sequence belongs to the prion family. Monomer and homodimer. Has a tendency to aggregate into amyloid fibrils containing a cross-beta spine, formed by a steric zipper of superposed beta-strands. Soluble oligomers may represent an intermediate stage on the path to fibril formation. Copper binding may promote oligomerization. Interacts with GRB2, APP, ERI3/PRNPIP and SYN1. Mislocalized cytosolically exposed PrP interacts with MGRN1; this interaction alters MGRN1 subcellular location and causes lysosomal enlargement. Interacts with KIAA1191.

Its subcellular location is the cell membrane. It is found in the golgi apparatus. Its primary physiological function is unclear. Has cytoprotective activity against internal or environmental stresses. May play a role in neuronal development and synaptic plasticity. May be required for neuronal myelin sheath maintenance. May play a role in iron uptake and iron homeostasis. Soluble oligomers are toxic to cultured neuroblastoma cells and induce apoptosis (in vitro). Association with GPC1 (via its heparan sulfate chains) targets PRNP to lipid rafts. Also provides Cu(2+) or Zn(2+) for the ascorbate-mediated GPC1 deaminase degradation of its heparan sulfate side chains. This chain is Major prion protein (PRNP), found in Nothocricetulus migratorius (Gray dwarf hamster).